Reading from the N-terminus, the 103-residue chain is ATP-dependent Clp protease adapter protein ClpS 1 (103 aa).

The protein belongs to the ClpS family. In terms of assembly, binds to the N-terminal domain of the chaperone ClpA.

Functionally, involved in the modulation of the specificity of the ClpAP-mediated ATP-dependent protein degradation. The polypeptide is ATP-dependent Clp protease adapter protein ClpS 1 (Rhodopseudomonas palustris (strain ATCC BAA-98 / CGA009)).